Reading from the N-terminus, the 97-residue chain is UPF0235 protein APP7_1431 (97 aa).

It belongs to the UPF0235 family.

In Actinobacillus pleuropneumoniae serotype 7 (strain AP76), this protein is UPF0235 protein APP7_1431.